A 127-amino-acid chain; its full sequence is Fumarate reductase subunit C (127 aa).

3 consecutive transmembrane segments (helical) span residues 30–50 (ATIL…GCLV), 67–87 (IVVV…QTFF), and 107–127 (IIVL…LVLV).

Belongs to the FrdC family. Part of an enzyme complex containing four subunits: a flavoprotein (FrdA), an iron-sulfur protein (FrdB), and two hydrophobic anchor proteins (FrdC and FrdD).

Its subcellular location is the cell inner membrane. Its function is as follows. Anchors the catalytic components of the fumarate reductase complex to the cell membrane, binds quinones. This chain is Fumarate reductase subunit C, found in Photobacterium profundum (strain SS9).